Here is a 115-residue protein sequence, read N- to C-terminus: Ribonuclease P protein component (115 aa).

The protein belongs to the RnpA family. As to quaternary structure, consists of a catalytic RNA component (M1 or rnpB) and a protein subunit.

The enzyme catalyses Endonucleolytic cleavage of RNA, removing 5'-extranucleotides from tRNA precursor.. Functionally, RNaseP catalyzes the removal of the 5'-leader sequence from pre-tRNA to produce the mature 5'-terminus. It can also cleave other RNA substrates such as 4.5S RNA. The protein component plays an auxiliary but essential role in vivo by binding to the 5'-leader sequence and broadening the substrate specificity of the ribozyme. The sequence is that of Ribonuclease P protein component from Macrococcus caseolyticus (strain JCSC5402) (Macrococcoides caseolyticum).